The primary structure comprises 396 residues: Proteasome-activating nucleotidase (396 aa).

Positions 16 to 57 (VTYLKRRIRQLELQVRMLEADKERLERELSRLRSEMSRLRQP) form a coiled coil. Residues 181–186 (GCGKTL) and histidine 320 contribute to the ATP site. Residues 394–396 (IYG) are docks into pockets in the proteasome alpha-ring to cause gate opening.

It belongs to the AAA ATPase family. As to quaternary structure, homohexamer. The hexameric complex has a two-ring architecture resembling a top hat that caps the 20S proteasome core at one or both ends. Upon ATP-binding, the C-terminus of PAN interacts with the alpha-rings of the proteasome core by binding to the intersubunit pockets.

The protein localises to the cytoplasm. Functionally, ATPase which is responsible for recognizing, binding, unfolding and translocation of substrate proteins into the archaeal 20S proteasome core particle. Is essential for opening the gate of the 20S proteasome via an interaction with its C-terminus, thereby allowing substrate entry and access to the site of proteolysis. Thus, the C-termini of the proteasomal ATPase function like a 'key in a lock' to induce gate opening and therefore regulate proteolysis. Unfolding activity requires energy from ATP hydrolysis, whereas ATP binding alone promotes ATPase-20S proteasome association which triggers gate opening, and supports translocation of unfolded substrates. This Pyrococcus furiosus (strain ATCC 43587 / DSM 3638 / JCM 8422 / Vc1) protein is Proteasome-activating nucleotidase.